A 167-amino-acid chain; its full sequence is Bacterial non-heme ferritin (167 aa).

One can recognise a Ferritin-like diiron domain in the interval Leu-2 to Gly-145. Glu-17, Glu-50, His-53, Glu-94, and Gln-127 together coordinate Fe cation.

Belongs to the ferritin family. Prokaryotic subfamily.

The protein resides in the cytoplasm. It catalyses the reaction 4 Fe(2+) + O2 + 6 H2O = 4 iron(III) oxide-hydroxide + 12 H(+). Functionally, iron-storage protein. The polypeptide is Bacterial non-heme ferritin (ftnA) (Staphylococcus saprophyticus subsp. saprophyticus (strain ATCC 15305 / DSM 20229 / NCIMB 8711 / NCTC 7292 / S-41)).